Here is a 154-residue protein sequence, read N- to C-terminus: Peptide deformylase (154 aa).

Residues C90 and H132 each contribute to the Fe cation site. E133 is an active-site residue. Fe cation is bound at residue H136.

The protein belongs to the polypeptide deformylase family. Fe(2+) is required as a cofactor.

It carries out the reaction N-terminal N-formyl-L-methionyl-[peptide] + H2O = N-terminal L-methionyl-[peptide] + formate. In terms of biological role, removes the formyl group from the N-terminal Met of newly synthesized proteins. Requires at least a dipeptide for an efficient rate of reaction. N-terminal L-methionine is a prerequisite for activity but the enzyme has broad specificity at other positions. This is Peptide deformylase from Halothermothrix orenii (strain H 168 / OCM 544 / DSM 9562).